A 129-amino-acid polypeptide reads, in one-letter code: Small ribosomal subunit protein uS9 (129 aa).

Basic and acidic residues predominate over residues 104-113 (TRDSRVVERK). The tract at residues 104-129 (TRDSRVVERKKPGKRKARRSRQFSKR) is disordered. Over residues 114-129 (KPGKRKARRSRQFSKR) the composition is skewed to basic residues.

The protein belongs to the universal ribosomal protein uS9 family.

This is Small ribosomal subunit protein uS9 from Sulfurimonas denitrificans (strain ATCC 33889 / DSM 1251) (Thiomicrospira denitrificans (strain ATCC 33889 / DSM 1251)).